Reading from the N-terminus, the 764-residue chain is Transient receptor potential cation channel subfamily V member 2 (764 aa).

A disordered region spans residues 1–46; sequence MTSPSSSPVFRLETLDGGQEDGSEADRGKLDFGSGLPPMESQFQGE. Residues 1-388 are required for interaction with SLC50A1; the sequence is MTSPSSSPVF…LLQAKWDLLI (388 aa). Residues 1–390 are Cytoplasmic-facing; the sequence is MTSPSSSPVF…QAKWDLLIPK (390 aa). Ser-6 carries the phosphoserine modification. ANK repeat units lie at residues 72–114, 115–161, 162–207, 208–243, 244–292, and 293–319; these read NRFD…TEGS, TGKT…DDYY, RGHS…TCFY, FGEL…ATDS, QGNT…IRNL, and QDLT…REFS. The helical transmembrane segment at 391 to 411 threads the bilayer; the sequence is FFLNFLCNLIYMFIFTAVAYH. Over 412–434 the chain is Extracellular; that stretch reads QPTLKKQAAPHLKAEVGNSMLLT. The chain crosses the membrane as a helical span at residues 435–455; the sequence is GHILILLGGIYLLVGQLWYFW. The Cytoplasmic segment spans residues 456–471; the sequence is RRHVFIWISFIDSYFE. Residues 472-492 traverse the membrane as a helical segment; it reads ILFLFQALLTVVSQVLCFLAI. Glu-493 is a topological domain (extracellular). A helical membrane pass occupies residues 494 to 514; it reads WYLPLLVSALVLGWLNLLYYT. Residues 515–537 are Cytoplasmic-facing; the sequence is RGFQHTGIYSVMIQKVILRDLLR. The chain crosses the membrane as a helical span at residues 538-558; sequence FLLIYLVFLFGFAVALVSLSQ. Residues 562–585 form a disordered region; the sequence is RPEAPTGPNATESVQPMEGQEDEG. N-linked (GlcNAc...) asparagine glycosylation is present at Asn-570. Positions 572 to 609 form an intramembrane region, pore-forming; it reads TESVQPMEGQEDEGNGAQYRGILEASLELFKFTIGMGE. The helical transmembrane segment at 622 to 642 threads the bilayer; it reads VLLLLLAYVLLTYILLLNMLI. Residues 643–764 are Cytoplasmic-facing; the sequence is ALMSETVNSV…YVPVQLLQSN (122 aa). Positions 725 to 756 are disordered; that stretch reads PSGAGVPRTLENPVLASPPKEDEDGASEENYV. Ser-751 and Ser-763 each carry phosphoserine.

This sequence belongs to the transient receptor (TC 1.A.4) family. TrpV subfamily. TRPV2 sub-subfamily. Homotetramer. Interacts with a cAMP-dependent protein kinase type II regulatory subunit (PRKAR2A or PRKAR2B) and ACBD3. Interacts with SLC50A1; the interaction probably occurs intracellularly and depends on TRPV2 N-glycosylation. In terms of processing, N-glycosylated. Phosphorylated by PKA.

The protein resides in the cell membrane. It is found in the cytoplasm. Its subcellular location is the melanosome. The catalysed reaction is Ca(2+)(in) = Ca(2+)(out). The enzyme catalyses Mg(2+)(in) = Mg(2+)(out). It catalyses the reaction Na(+)(in) = Na(+)(out). It carries out the reaction K(+)(in) = K(+)(out). Functionally, calcium-permeable, non-selective cation channel with an outward rectification. Seems to be regulated, at least in part, by IGF1, PDGF and neuropeptide head activator. May transduce physical stimuli in mast cells. Activated by temperatures higher than 52 degrees Celsius; is not activated by vanilloids and acidic pH. This chain is Transient receptor potential cation channel subfamily V member 2 (TRPV2), found in Homo sapiens (Human).